We begin with the raw amino-acid sequence, 669 residues long: MSKEIAKKRIEELRDLLNTFNYQYHVLDNPSVSDAEYDRNMQELIKLEAENPEFMSEDSPSVRVGGTVLDIFEKVTHKSPMLSLGNAFNEGDLRDFDRRVRQGIDGANVRYICELKIDGLAVSLHYEKGRFIQGATRGDGVTGEDITQNLKTIKAIPLRLNEEVTLEARGEAYMPKRSFVKLNEEKEQNGEDVFANPRNAAAGSIRQLDPKIAAKRNLSMFVYGLANVEEKTIPSHSESLDFLGELGFKTNPNRRTCETIEEVIAYVEEWQEKRPHLDYEIDGIVIKVDDVALQESLGTTAKSPRWAIAYKFPAEEVVTRLTGIELSVGRTGVVTPTAELEPVRVAGTIVRRASLHNEDLIREKDIRIGDYVVVKKAGDIIPEVVNVIFDKRTGEEEEYRMPTHCPACESELVRLEEEVALRCINPTCPAQIREGLIHFVSRNAMNIDGLGERVITQLFDADYIRTFADLYALTKEQLLQLERFGEKSATNLIQAIENSKENSLERLLFGLGIRHVGAKAARTFAEHFETMDELVKATEEELKAINEIGEKMAQSVVTYFDNEDVLELLQQFKEYGVNMKYKGIKIADLQNVESYFAGKTVVLTGKLEVMGRSEAKKKIEALGGKVTGSVSKSTDLVVAGEAAGSKLAQAEKHNVEVWNEERFLQELNK.

Residues 34–38, 83–84, and Glu-114 each bind NAD(+); these read DAEYD and SL. Residue Lys-116 is the N6-AMP-lysine intermediate of the active site. Arg-137, Glu-171, Lys-287, and Lys-311 together coordinate NAD(+). Zn(2+)-binding residues include Cys-405, Cys-408, Cys-423, and Cys-428. The BRCT domain maps to 591–669; sequence NVESYFAGKT…EERFLQELNK (79 aa).

It belongs to the NAD-dependent DNA ligase family. LigA subfamily. Requires Mg(2+) as cofactor. Mn(2+) serves as cofactor.

It catalyses the reaction NAD(+) + (deoxyribonucleotide)n-3'-hydroxyl + 5'-phospho-(deoxyribonucleotide)m = (deoxyribonucleotide)n+m + AMP + beta-nicotinamide D-nucleotide.. Functionally, DNA ligase that catalyzes the formation of phosphodiester linkages between 5'-phosphoryl and 3'-hydroxyl groups in double-stranded DNA using NAD as a coenzyme and as the energy source for the reaction. It is essential for DNA replication and repair of damaged DNA. The polypeptide is DNA ligase (Bacillus cereus (strain B4264)).